The primary structure comprises 318 residues: NADH-ubiquinone oxidoreductase chain 1 (318 aa).

The next 9 membrane-spanning stretches (helical) occupy residues 2–22 (FLTNISCLIIPILLAVAFLTL), 36–56 (GPNIVGPYGLLQPIADAIKLF), 69–89 (LLFTIAPTLALSLALTLWIPL), 100–120 (LGMLFILAMSSLAVYSILWSG), 130–152 (IGALRAVAQTISYEVTLAIILLH), 171–191 (HIWLIIPSWPLTMMWFISTLA), 217–237 (AGPFALFFLAEYANIMMMNAL), 254–273 (LYSTNFMLKTTMLTISFLWI), and 294–314 (LPLTLALCMWHTSLLISLTSI).

This sequence belongs to the complex I subunit 1 family.

The protein resides in the mitochondrion inner membrane. The enzyme catalyses a ubiquinone + NADH + 5 H(+)(in) = a ubiquinol + NAD(+) + 4 H(+)(out). Core subunit of the mitochondrial membrane respiratory chain NADH dehydrogenase (Complex I) that is believed to belong to the minimal assembly required for catalysis. Complex I functions in the transfer of electrons from NADH to the respiratory chain. The immediate electron acceptor for the enzyme is believed to be ubiquinone. In Cyclopes didactylus (Silky anteater), this protein is NADH-ubiquinone oxidoreductase chain 1 (MT-ND1).